The primary structure comprises 360 residues: GTP 3',8-cyclase 2 (360 aa).

The 227-residue stretch at 33–259 (TFGRVANDLR…PDPAPRGSAP (227 aa)) folds into the Radical SAM core domain. Arginine 42 contributes to the GTP binding site. [4Fe-4S] cluster-binding residues include cysteine 49 and cysteine 53. Residue tyrosine 55 coordinates S-adenosyl-L-methionine. [4Fe-4S] cluster is bound at residue cysteine 56. Arginine 93 is a binding site for GTP. Glycine 97 serves as a coordination point for S-adenosyl-L-methionine. Threonine 124 is a binding site for GTP. An S-adenosyl-L-methionine-binding site is contributed by serine 148. Lysine 185 provides a ligand contact to GTP. An S-adenosyl-L-methionine-binding site is contributed by methionine 219. Residues cysteine 287 and cysteine 290 each coordinate [4Fe-4S] cluster. 292 to 294 (RTR) is a GTP binding site. Cysteine 304 contacts [4Fe-4S] cluster.

Belongs to the radical SAM superfamily. MoaA family. In terms of assembly, monomer and homodimer. It depends on [4Fe-4S] cluster as a cofactor.

The enzyme catalyses GTP + AH2 + S-adenosyl-L-methionine = (8S)-3',8-cyclo-7,8-dihydroguanosine 5'-triphosphate + 5'-deoxyadenosine + L-methionine + A + H(+). It functions in the pathway cofactor biosynthesis; molybdopterin biosynthesis. In terms of biological role, catalyzes the cyclization of GTP to (8S)-3',8-cyclo-7,8-dihydroguanosine 5'-triphosphate. This Mycobacterium bovis (strain ATCC BAA-935 / AF2122/97) protein is GTP 3',8-cyclase 2.